A 468-amino-acid chain; its full sequence is Glutamate--tRNA ligase (468 aa).

Positions 8-18 match the 'HIGH' region motif; sequence PSPTGFLHVGG. Residues Cys97, Cys99, Cys124, and Asp126 each contribute to the Zn(2+) site. A 'KMSKS' region motif is present at residues 236–240; that stretch reads KLSKR. Lys239 is a binding site for ATP.

Belongs to the class-I aminoacyl-tRNA synthetase family. Glutamate--tRNA ligase type 1 subfamily. In terms of assembly, monomer. Zn(2+) serves as cofactor.

It localises to the cytoplasm. The enzyme catalyses tRNA(Glu) + L-glutamate + ATP = L-glutamyl-tRNA(Glu) + AMP + diphosphate. Functionally, catalyzes the attachment of glutamate to tRNA(Glu) in a two-step reaction: glutamate is first activated by ATP to form Glu-AMP and then transferred to the acceptor end of tRNA(Glu). This chain is Glutamate--tRNA ligase, found in Francisella tularensis subsp. tularensis (strain SCHU S4 / Schu 4).